Reading from the N-terminus, the 88-residue chain is DNA-directed RNA polymerase subunit omega (88 aa).

This sequence belongs to the RNA polymerase subunit omega family. The RNAP catalytic core consists of 2 alpha, 1 beta, 1 beta' and 1 omega subunit. When a sigma factor is associated with the core the holoenzyme is formed, which can initiate transcription.

It catalyses the reaction RNA(n) + a ribonucleoside 5'-triphosphate = RNA(n+1) + diphosphate. Promotes RNA polymerase assembly. Latches the N- and C-terminal regions of the beta' subunit thereby facilitating its interaction with the beta and alpha subunits. In Haemophilus influenzae (strain 86-028NP), this protein is DNA-directed RNA polymerase subunit omega.